The sequence spans 496 residues: Probable malate:quinone oxidoreductase (496 aa).

This sequence belongs to the MQO family. It depends on FAD as a cofactor.

It carries out the reaction (S)-malate + a quinone = a quinol + oxaloacetate. Its pathway is carbohydrate metabolism; tricarboxylic acid cycle; oxaloacetate from (S)-malate (quinone route): step 1/1. The chain is Probable malate:quinone oxidoreductase from Prochlorococcus marinus (strain NATL2A).